Consider the following 1159-residue polypeptide: Caspase recruitment domain-containing protein 11 (1159 aa).

Positions 18 to 110 (EEEALWDNVE…ELYKLVTGKE (93 aa)) constitute a CARD domain. Positions 111 to 128 (PTRRFSTIVVEEGHEGLT) are linker. Positions 176-449 (FQERYYKMKE…KDNGSLDQSL (274 aa)) form a coiled coil. The disordered stretch occupies residues 441-496 (DNGSLDQSLPRHLPATIISQNLGDTSPRTNGQEADDSSTSEESPEDSKYFLPYHPP). Ser448 and Ser466 each carry phosphoserine. The inhibitory domain (ID) stretch occupies residues 450–671 (PRHLPATIIS…GHVRGTGPLV (222 aa)). Residues 457-472 (IISQNLGDTSPRTNGQ) are compositionally biased toward polar residues. Residues 473–484 (EADDSSTSEESP) are compositionally biased toward acidic residues. Ser512 and Ser540 each carry phosphoserine. The segment at 532-578 (HEEDFTDGSPSSSRSLPVTSSFSKMQPHRSRSSIMSITAEPPGNDSI) is disordered. The segment covering 540-554 (SPSSSRSLPVTSSFS) has biased composition (low complexity). At Ser564 the chain carries Phosphoserine; by PKC/PRKCB and PKC/PRKCQ. A Phosphoserine modification is found at Ser598. A disordered region spans residues 610-631 (NHERYSFGPPSIHSSSSSHQSE). The span at 620–630 (SIHSSSSSHQS) shows a compositional bias: low complexity. Ser649 and Ser657 each carry phosphoserine; by PKC/PRKCB and PKC/PRKCQ. Residues 672 to 760 (QHTTLNGDGL…LITLHYKVNH (89 aa)) enclose the PDZ domain. 2 positions are modified to phosphoserine: Ser891 and Ser930. Residues 978 to 1145 (RRRPVLFTPT…LLRVLKDKIV (168 aa)) enclose the Guanylate kinase-like domain.

Homodimer; disulfide-linked. Homomultimer; polymerizes following activation, forming a nucleating helical template that seeds BCL10-filament formation via a CARD-CARD interaction. Interacts (via CARD domain) with BCL10 (via CARD domain); interaction takes place following CARD11 activation and polymerization, leading to the formation of a filamentous CBM complex assembly. Component of a CBM complex (CARD11-BCL10-MALT1) complex involved in NF-kappa-B activation. Found in a membrane raft complex, at least composed of BCL10, CARD11, DPP4 and IKBKB. Interacts (via PDZ domain) with DPP4 (via cytoplasmic tail). In terms of processing, phosphorylation at Ser-564, Ser-649 and Ser-657 by PRKCB and PRKCQ leads to a shift from an inactive to an active form that activates the NF-kappa-B signaling.

The protein resides in the cytoplasm. The protein localises to the membrane raft. Its activity is regulated as follows. Maintained in an autoinhibited state via homodimerization in which the CARD domain forms an extensive interaction with the adjacent linker and coiled-coil regions. Activation downstream of T-cell receptor (TCR) by phosphorylation by PRKCB and PRKCQ triggers CARD11 homooligomerization and BCL10 recruitment, followed by activation of NF-kappa-B. Adapter protein that plays a key role in adaptive immune response by transducing the activation of NF-kappa-B downstream of T-cell receptor (TCR) and B-cell receptor (BCR) engagement. Transduces signals downstream TCR or BCR activation via the formation of a multiprotein complex together with BCL10 and MALT1 that induces NF-kappa-B and MAP kinase p38 (MAPK11, MAPK12, MAPK13 and/or MAPK14) pathways. Upon activation in response to TCR or BCR triggering, CARD11 homooligomerizes to form a nucleating helical template that recruits BCL10 via CARD-CARD interaction, thereby promoting polymerization of BCL10 and subsequent recruitment of MALT1: this leads to I-kappa-B kinase (IKK) phosphorylation and degradation, and release of NF-kappa-B proteins for nuclear translocation. Its binding to DPP4 induces T-cell proliferation and NF-kappa-B activation in a T-cell receptor/CD3-dependent manner. Promotes linear ubiquitination of BCL10 by promoting the targeting of BCL10 to RNF31/HOIP. Stimulates the phosphorylation of BCL10. Also activates the TORC1 signaling pathway. This chain is Caspase recruitment domain-containing protein 11, found in Mus musculus (Mouse).